Here is a 337-residue protein sequence, read N- to C-terminus: Eukaryotic translation initiation factor 3 subunit H (337 aa).

Positions 21-153 (VQCDGLAVMK…LKAYRLTPQA (133 aa)) constitute an MPN domain.

Belongs to the eIF-3 subunit H family. In terms of assembly, component of the eukaryotic translation initiation factor 3 (eIF-3) complex. The eIF-3 complex interacts with pix. Interacts with mxt.

Its subcellular location is the cytoplasm. In terms of biological role, component of the eukaryotic translation initiation factor 3 (eIF-3) complex, which is involved in protein synthesis of a specialized repertoire of mRNAs and, together with other initiation factors, stimulates binding of mRNA and methionyl-tRNAi to the 40S ribosome. The eIF-3 complex specifically targets and initiates translation of a subset of mRNAs involved in cell proliferation. This chain is Eukaryotic translation initiation factor 3 subunit H, found in Drosophila virilis (Fruit fly).